Consider the following 355-residue polypeptide: tRNA-specific 2-thiouridylase MnmA 1 (355 aa).

6 to 13 (LLSGGVDS) serves as a coordination point for ATP. Residues 92-94 (NPD) form an interaction with target base in tRNA region. Cysteine 97 serves as the catalytic Nucleophile. Cysteine 97 and cysteine 192 are joined by a disulfide. ATP is bound at residue glycine 120. The interval 142 to 144 (KDQ) is interaction with tRNA. Catalysis depends on cysteine 192, which acts as the Cysteine persulfide intermediate.

It belongs to the MnmA/TRMU family.

Its subcellular location is the cytoplasm. It carries out the reaction S-sulfanyl-L-cysteinyl-[protein] + uridine(34) in tRNA + AH2 + ATP = 2-thiouridine(34) in tRNA + L-cysteinyl-[protein] + A + AMP + diphosphate + H(+). Functionally, catalyzes the 2-thiolation of uridine at the wobble position (U34) of tRNA, leading to the formation of s(2)U34. The sequence is that of tRNA-specific 2-thiouridylase MnmA 1 from Bacteroides thetaiotaomicron (strain ATCC 29148 / DSM 2079 / JCM 5827 / CCUG 10774 / NCTC 10582 / VPI-5482 / E50).